The following is a 199-amino-acid chain: GQGSLAYPGLRTQGNLETLSGPNDATRGLTSLADTFEHVIEELLDEQQVIQPSKENKDADLYSSRVMLSSQVPLEPPLLFLLEEYKNYLDAANMSMRVRRHSDPARRGELSVCDSTSEWVTAAEKKTAVDMSGATVTVLEKVPVPKGQLKQYFYETKCSSKGYAKEGCRGIDKRYWNSQCRTTQSYVRALTMDNKKRVG.

Residues 1 to 23 (GQGSLAYPGLRTQGNLETLSGPN) are disordered. A propeptide spanning residues 1–100 (GQGSLAYPGL…AANMSMRVRR (100 aa)) is cleaved from the precursor. Polar residues predominate over residues 12 to 23 (TQGNLETLSGPN). N-linked (GlcNAc...) asparagine glycosylation is present at N93. A disulfide bridge links C113 with C180.

The protein belongs to the NGF-beta family.

The protein localises to the secreted. Promotes the survival of neuronal populations that are all located either in the central nervous system or directly connected to it. The polypeptide is Neurotrophic factor BDNF precursor form (BDNF) (Morelia spilota (Carpet python)).